The sequence spans 504 residues: Cytochrome P450 2K4 (504 aa).

Residue cysteine 447 participates in heme binding.

It belongs to the cytochrome P450 family. Heme is required as a cofactor.

The protein resides in the endoplasmic reticulum membrane. It is found in the microsome membrane. It catalyses the reaction an organic molecule + reduced [NADPH--hemoprotein reductase] + O2 = an alcohol + oxidized [NADPH--hemoprotein reductase] + H2O + H(+). In Oncorhynchus mykiss (Rainbow trout), this protein is Cytochrome P450 2K4 (cyp2k4).